Consider the following 563-residue polypeptide: NAD-dependent malic enzyme (563 aa).

The active-site Proton donor is the Tyr101. Arg154 provides a ligand contact to NAD(+). Catalysis depends on Lys172, which acts as the Proton acceptor. The a divalent metal cation site is built by Glu243, Asp244, and Asp267. Residues Asp267 and Asn416 each coordinate NAD(+).

It belongs to the malic enzymes family. In terms of assembly, homotetramer. Mg(2+) is required as a cofactor. Mn(2+) serves as cofactor.

It catalyses the reaction (S)-malate + NAD(+) = pyruvate + CO2 + NADH. The enzyme catalyses oxaloacetate + H(+) = pyruvate + CO2. This is NAD-dependent malic enzyme from Pseudomonas savastanoi pv. phaseolicola (strain 1448A / Race 6) (Pseudomonas syringae pv. phaseolicola (strain 1448A / Race 6)).